Consider the following 280-residue polypeptide: Energy-coupling factor transporter ATP-binding protein EcfA2 (280 aa).

Residues Ile-3–Gly-245 form the ABC transporter domain. An ATP-binding site is contributed by Gly-40–Ser-47.

The protein belongs to the ABC transporter superfamily. Energy-coupling factor EcfA family. As to quaternary structure, forms a stable energy-coupling factor (ECF) transporter complex composed of 2 membrane-embedded substrate-binding proteins (S component), 2 ATP-binding proteins (A component) and 2 transmembrane proteins (T component).

The protein localises to the cell membrane. Functionally, ATP-binding (A) component of a common energy-coupling factor (ECF) ABC-transporter complex. Unlike classic ABC transporters this ECF transporter provides the energy necessary to transport a number of different substrates. The protein is Energy-coupling factor transporter ATP-binding protein EcfA2 of Streptococcus agalactiae serotype Ia (strain ATCC 27591 / A909 / CDC SS700).